Consider the following 477-residue polypeptide: Endoglucanase A (477 aa).

The signal sequence occupies residues 1–32; the sequence is MKNVKKRVGVVLLILAVLGVYMLAMPANTVSA. Catalysis depends on Glu95, which acts as the Proton donor. Asp152 functions as the Nucleophile in the catalytic mechanism. Positions 411–477 constitute a Dockerin domain; sequence PQVVYGDVNG…LIKSIPHLPY (67 aa).

Belongs to the glycosyl hydrolase 8 (cellulase D) family.

The enzyme catalyses Endohydrolysis of (1-&gt;4)-beta-D-glucosidic linkages in cellulose, lichenin and cereal beta-D-glucans.. This enzyme catalyzes the endohydrolysis of 1,4-beta-glucosidic linkages in cellulose, lichenin and cereal beta-D-glucans. The polypeptide is Endoglucanase A (celA) (Acetivibrio thermocellus (strain ATCC 27405 / DSM 1237 / JCM 9322 / NBRC 103400 / NCIMB 10682 / NRRL B-4536 / VPI 7372) (Clostridium thermocellum)).